The chain runs to 279 residues: Pantothenate synthetase (279 aa).

Residue 26 to 33 participates in ATP binding; that stretch reads MGNLHEGH. Catalysis depends on His33, which acts as the Proton donor. Gln57 provides a ligand contact to (R)-pantoate. Gln57 lines the beta-alanine pocket. 144–147 contacts ATP; sequence GKKD. Residue Gln150 participates in (R)-pantoate binding. ATP-binding positions include Val173 and 181–184; that span reads LSSR.

This sequence belongs to the pantothenate synthetase family. As to quaternary structure, homodimer.

Its subcellular location is the cytoplasm. It catalyses the reaction (R)-pantoate + beta-alanine + ATP = (R)-pantothenate + AMP + diphosphate + H(+). Its pathway is cofactor biosynthesis; (R)-pantothenate biosynthesis; (R)-pantothenate from (R)-pantoate and beta-alanine: step 1/1. Catalyzes the condensation of pantoate with beta-alanine in an ATP-dependent reaction via a pantoyl-adenylate intermediate. This chain is Pantothenate synthetase, found in Burkholderia vietnamiensis (strain G4 / LMG 22486) (Burkholderia cepacia (strain R1808)).